Reading from the N-terminus, the 147-residue chain is Myoglobin (147 aa).

One can recognise a Globin domain in the interval 2–141; that stretch reads ADFDMVLKCW…IIADMEADYK (140 aa). Position 60 (His-60) interacts with nitrite. His-60 contacts O2. Heme b is bound at residue His-89.

This sequence belongs to the globin family. As to quaternary structure, monomeric.

It localises to the cytoplasm. It is found in the sarcoplasm. The catalysed reaction is Fe(III)-heme b-[protein] + nitric oxide + H2O = Fe(II)-heme b-[protein] + nitrite + 2 H(+). It carries out the reaction H2O2 + AH2 = A + 2 H2O. Monomeric heme protein which primary function is to store oxygen and facilitate its diffusion within muscle tissues. Reversibly binds oxygen through a pentacoordinated heme iron and enables its timely and efficient release as needed during periods of heightened demand. Depending on the oxidative conditions of tissues and cells, and in addition to its ability to bind oxygen, it also has a nitrite reductase activity whereby it regulates the production of bioactive nitric oxide. Under stress conditions, like hypoxia and anoxia, it also protects cells against reactive oxygen species thanks to its pseudoperoxidase activity. This chain is Myoglobin (mb), found in Pseudochaenichthys georgianus (South Georgia icefish).